The primary structure comprises 575 residues: NEDD4-binding protein 2-like 2 (575 aa).

3 stretches are compositionally biased toward basic and acidic residues: residues 69–87, 129–142, and 149–167; these read QEDK…EMPG, PPEK…KSET, and DSKR…KLEM. Disordered stretches follow at residues 69 to 169 and 555 to 575; these read QEDK…EMDT and GEQR…ADDY. Residues 162–194 are a coiled coil; sequence SKKLEMDTELSQFYKEIEELENENEASQGSCTE. The segment covering 564-575 has biased composition (polar residues); sequence GSHSQVSIADDY.

This chain is NEDD4-binding protein 2-like 2 (N4bp2l2), found in Mus musculus (Mouse).